Reading from the N-terminus, the 139-residue chain is Chorion protein S16 (139 aa).

An N-terminal signal peptide occupies residues 1 to 21 (MSVNYMRLLCLMACCFSVCLA).

The protein belongs to the chorion protein S16 family.

It is found in the secreted. Functionally, chorion membrane (egg shell) protein; plays a role in protecting the egg from the environment. This chain is Chorion protein S16 (Cp16), found in Drosophila virilis (Fruit fly).